A 244-amino-acid chain; its full sequence is tRNA uridine(34) hydroxylase (244 aa).

The Rhodanese domain occupies 129–219; sequence QGRELVMLDT…GILKYFEETD (91 aa). Cysteine 183 serves as the catalytic Cysteine persulfide intermediate.

The protein belongs to the TrhO family.

It carries out the reaction uridine(34) in tRNA + AH2 + O2 = 5-hydroxyuridine(34) in tRNA + A + H2O. Functionally, catalyzes oxygen-dependent 5-hydroxyuridine (ho5U) modification at position 34 in tRNAs. In Bordetella bronchiseptica (strain ATCC BAA-588 / NCTC 13252 / RB50) (Alcaligenes bronchisepticus), this protein is tRNA uridine(34) hydroxylase.